The primary structure comprises 381 residues: uncharacterized protein (381 aa).

Positions 331-340 (MQNGYANNGR) are enriched in polar residues. The tract at residues 331-381 (MQNGYANNGRNHQRERFERPEKNSKKNKFLPFNGSNKEKKRDKLKKNCVIM) is disordered. The span at 342–354 (HQRERFERPEKNS) shows a compositional bias: basic and acidic residues. The segment covering 372 to 381 (DKLKKNCVIM) has biased composition (basic residues).

The protein resides in the cytoplasm. It is found in the nucleus. This is an uncharacterized protein from Saccharomyces cerevisiae (strain ATCC 204508 / S288c) (Baker's yeast).